Here is a 150-residue protein sequence, read N- to C-terminus: Avidin-related protein 7 (150 aa).

The N-terminal stretch at 1-24 (MVHATSPLLLLLLLSLALVAPGLS) is a signal peptide. The Avidin-like domain maps to 26-147 (RKCSLTGEWD…GYNNFTRQRT (122 aa)). Residues Cys-28 and Cys-105 are joined by a disulfide bond. Residues Asn-36 and Ser-40 each coordinate biotin. N-linked (GlcNAc...) asparagine glycosylation is found at Asn-41 and Asn-54. 3 residues coordinate biotin: Tyr-57, Thr-59, and Asp-63. The N-linked (GlcNAc...) asparagine glycan is linked to Asn-93. Biotin-binding residues include Ser-95, Ser-99, and Asn-140. An N-linked (GlcNAc...) asparagine glycan is attached at Asn-141.

It belongs to the avidin/streptavidin family. Homotetramer. Post-translationally, glycosylated.

It is found in the secreted. In terms of biological role, forms a strong non-covalent specific complex with biotin. In Gallus gallus (Chicken), this protein is Avidin-related protein 7 (AVR7).